The chain runs to 452 residues: Adenosylmethionine-8-amino-7-oxononanoate aminotransferase (452 aa).

Residue 116–117 (GS) coordinates pyridoxal 5'-phosphate. Tyr152 serves as a coordination point for substrate. A pyridoxal 5'-phosphate-binding site is contributed by Asp257. Residues Lys286, Gly321, and Arg414 each contribute to the substrate site. An N6-(pyridoxal phosphate)lysine modification is found at Lys286.

This sequence belongs to the class-III pyridoxal-phosphate-dependent aminotransferase family. BioA subfamily. Homodimer. Pyridoxal 5'-phosphate is required as a cofactor.

It is found in the cytoplasm. The catalysed reaction is (8S)-8-amino-7-oxononanoate + S-adenosyl-L-methionine = S-adenosyl-4-methylsulfanyl-2-oxobutanoate + (7R,8S)-7,8-diammoniononanoate. Its pathway is cofactor biosynthesis; biotin biosynthesis; 7,8-diaminononanoate from 8-amino-7-oxononanoate (SAM route): step 1/1. Catalyzes the transfer of the alpha-amino group from S-adenosyl-L-methionine (SAM) to 7-keto-8-aminopelargonic acid (KAPA) to form 7,8-diaminopelargonic acid (DAPA). It is the only aminotransferase known to utilize SAM as an amino donor. The polypeptide is Adenosylmethionine-8-amino-7-oxononanoate aminotransferase (Staphylococcus aureus (strain NCTC 8325 / PS 47)).